The sequence spans 359 residues: Lipopolysaccharide 1,6-galactosyltransferase (359 aa).

Positions 242 and 274 each coordinate UDP.

Belongs to the glycosyltransferase group 1 family. Glycosyltransferase 4 subfamily.

It carries out the reaction alpha-D-Glc-(1-&gt;3)-[L-alpha-D-Hep-(1-&gt;7)]-4-O-PO3(2-)-L-alpha-D-Hep-(1-&gt;3)-4-O-PO3(2-)-L-alpha-D-Hep-(1-&gt;5)-[alpha-Kdo-(2-&gt;4)]-alpha-Kdo-(2-&gt;6)-lipid A + UDP-alpha-D-galactose = alpha-D-Gal-(1-&gt;6)-alpha-D-Glc-(1-&gt;3)-[L-alpha-D-Hep-(1-&gt;7)]-4-O-PO3(2-)-L-alpha-D-Hep-(1-&gt;3)-4-O-PO3(2-)-L-alpha-D-Hep-(1-&gt;5)-[alpha-Kdo-(2-&gt;4)]-alpha-Kdo-(2-&gt;6)-lipid A + UDP + H(+). It functions in the pathway bacterial outer membrane biogenesis; LPS core biosynthesis. Functionally, galactosyltransferase involved in the biosynthesis of the core oligosaccharide region of lipopolysaccharide (LPS). Catalyzes the addition of galactose from UDP-galactose to the first glucose residue of the LPS outer core. Cannot use other sugar donors, such as UDP-glucose, UDP-glucuronic acid, UDP-galacuronic acid, GDP-mannose, ADP-glucose and GDP-glucose. In the absence of a lipid acceptor, can hydrolyze UDP-galactose to UDP and galactose. The chain is Lipopolysaccharide 1,6-galactosyltransferase from Escherichia coli (strain K12).